A 299-amino-acid polypeptide reads, in one-letter code: tRNA pseudouridine synthase B (299 aa).

Catalysis depends on aspartate 38, which acts as the Nucleophile.

The protein belongs to the pseudouridine synthase TruB family. Type 1 subfamily.

It carries out the reaction uridine(55) in tRNA = pseudouridine(55) in tRNA. Functionally, responsible for synthesis of pseudouridine from uracil-55 in the psi GC loop of transfer RNAs. This Alkaliphilus oremlandii (strain OhILAs) (Clostridium oremlandii (strain OhILAs)) protein is tRNA pseudouridine synthase B.